A 286-amino-acid chain; its full sequence is Soluble epoxide hydrolase (286 aa).

An AB hydrolase-1 domain is found at 26–123 (YPLVLLHGWP…DLVERLFILD (98 aa)). The active-site Nucleophile is Asp-99. Tyr-209 acts as the Proton donor in catalysis. His-264 functions as the Proton acceptor in the catalytic mechanism.

Belongs to the AB hydrolase superfamily. Epoxide hydrolase family. In terms of assembly, homotetramer.

Its subcellular location is the cytoplasm. It is found in the cell membrane. The catalysed reaction is an epoxide + H2O = an ethanediol. Functionally, involved in catabolic degradation of epoxides. Shows highest activity towards C6 and C7 carbocyclic epoxides. Also active towards linear 1,2-epoxyalkanes. The sequence is that of Soluble epoxide hydrolase from Corynebacterium sp. (strain C12).